The chain runs to 135 residues: NADH-quinone oxidoreductase subunit A (135 aa).

3 consecutive transmembrane segments (helical) span residues 9–29, 67–87, and 97–117; these read YFPILLQAVIAMGLAAGLLTV, VGMLFILFDIEAIFLYPWVVV, and LFGFYEMLTFVILILSGFFYI.

This sequence belongs to the complex I subunit 3 family. In terms of assembly, NDH-1 is composed of 14 different subunits. Subunits NuoA, H, J, K, L, M, N constitute the membrane sector of the complex.

It localises to the cell inner membrane. It catalyses the reaction a quinone + NADH + 5 H(+)(in) = a quinol + NAD(+) + 4 H(+)(out). In terms of biological role, NDH-1 shuttles electrons from NADH, via FMN and iron-sulfur (Fe-S) centers, to quinones in the respiratory chain. The immediate electron acceptor for the enzyme in this species is believed to be ubiquinone. Couples the redox reaction to proton translocation (for every two electrons transferred, four hydrogen ions are translocated across the cytoplasmic membrane), and thus conserves the redox energy in a proton gradient. The protein is NADH-quinone oxidoreductase subunit A of Solibacter usitatus (strain Ellin6076).